The primary structure comprises 376 residues: MEDPNRMLAHTGGMMAPQGYGLSGQDDGQNAGSENEVRKQKDIGEILQQIMSISEQSLDEAQARKHTLNCHRMKPALFSVLCEIKEKTVLSIRNTQEEEPPDPQLMRLDNMLIAEGVAGPEKGGGGAAAASAAAASQGGSLSIDGADNAIEHSDYRAKLAQIRQIYHQELEKYEQACNEFTTHVMNLLREQSRTRPITPKEIERMVQIIHKKFSSIQMQLKQSTCEAVMILRSRFLDARRKRRNFSKQASEILNEYFYSHLSNPYPSEEAKEELARKCGITVSQVSNWFGNKRIRYKKNIGKAQEEANLYAAKKAAGASPYSMAGPPSGTTTPMMSPAPPQDSMGYPMGSGGYDQQQPYDNSMGGYDPNLHQDLSP.

The interval Met1–Val37 is disordered. The region spanning Arg38–Asp237 is the PBC domain. The PBC-A stretch occupies residues Glu45–Gly124. The segment at Ala127 to Asp237 is PBC-B. Positions Ala238–Ile300 form a DNA-binding region, homeobox; TALE-type. Over residues Ala318 to Met335 the composition is skewed to low complexity. The tract at residues Ala318 to Pro376 is disordered.

It belongs to the TALE/PBX homeobox family. As to quaternary structure, interacts with Ubx and hth. In terms of tissue distribution, prior to full germband retraction it is ubiquitously present, after germband retraction, mostly present in the anterior portion of the ventral nerve cord.

It localises to the nucleus. Its function is as follows. Transcription factor which acts with the selector homeodomain proteins altering the regulation of downstream target genes such as wingless (wg), teashirt (tsh) and decapentaplegic (dpp), thus affecting segmental identity. Delimits the eye field and prevent inappropriate eye development. Required for proper localization of chordotonal organs within the peripheral nervous system. The sequence is that of Homeobox protein extradenticle (exd) from Drosophila melanogaster (Fruit fly).